The sequence spans 570 residues: Urease subunit alpha (570 aa).

The region spanning 131-570 (GGFDSHIHFI…LPLAQRYFMF (440 aa)) is the Urease domain. Ni(2+) is bound by residues H136, H138, and K219. N6-carboxylysine is present on K219. H221 is a binding site for substrate. Positions 248 and 274 each coordinate Ni(2+). The Proton donor role is filled by H322. Residue D362 participates in Ni(2+) binding.

The protein belongs to the metallo-dependent hydrolases superfamily. Urease alpha subunit family. Heterotrimer of UreA (gamma), UreB (beta) and UreC (alpha) subunits. Three heterotrimers associate to form the active enzyme. The cofactor is Ni cation. Post-translationally, carboxylation allows a single lysine to coordinate two nickel ions.

The protein localises to the cytoplasm. It catalyses the reaction urea + 2 H2O + H(+) = hydrogencarbonate + 2 NH4(+). It participates in nitrogen metabolism; urea degradation; CO(2) and NH(3) from urea (urease route): step 1/1. The polypeptide is Urease subunit alpha (Rhodopseudomonas palustris (strain TIE-1)).